Here is a 551-residue protein sequence, read N- to C-terminus: Adenylosuccinate synthetase (551 aa).

GTP-binding positions include 131–137 (GDEGKGK) and 159–161 (GHT). Residue aspartate 132 is the Proton acceptor of the active site. Positions 132 and 159 each coordinate Mg(2+). IMP contacts are provided by residues 132–135 (DEGK), 157–160 (NAGH), threonine 248, arginine 262, asparagine 339, threonine 354, and arginine 418. Histidine 160 (proton donor) is an active-site residue. Residue 414 to 420 (TTTGRAR) coordinates substrate. Residues arginine 420, 446 to 448 (KLD), and 528 to 530 (GVG) each bind GTP.

The protein belongs to the adenylosuccinate synthetase family. Homodimer. Requires Mg(2+) as cofactor.

Its subcellular location is the cytoplasm. The enzyme catalyses IMP + L-aspartate + GTP = N(6)-(1,2-dicarboxyethyl)-AMP + GDP + phosphate + 2 H(+). It participates in purine metabolism; AMP biosynthesis via de novo pathway; AMP from IMP: step 1/2. Functionally, plays an important role in the de novo pathway and in the salvage pathway of purine nucleotide biosynthesis. Catalyzes the first committed step in the biosynthesis of AMP from IMP. The protein is Adenylosuccinate synthetase of Phytophthora infestans (strain T30-4) (Potato late blight agent).